A 463-amino-acid polypeptide reads, in one-letter code: Phosphoglucosamine mutase (463 aa).

Ser110 serves as the catalytic Phosphoserine intermediate. The Mg(2+) site is built by Ser110, Asp255, Asp257, and Asp259. A Phosphoserine modification is found at Ser110.

It belongs to the phosphohexose mutase family. The cofactor is Mg(2+). Post-translationally, activated by phosphorylation.

The enzyme catalyses alpha-D-glucosamine 1-phosphate = D-glucosamine 6-phosphate. In terms of biological role, catalyzes the conversion of glucosamine-6-phosphate to glucosamine-1-phosphate. In Koribacter versatilis (strain Ellin345), this protein is Phosphoglucosamine mutase.